The sequence spans 307 residues: UDP-N-acetylenolpyruvoylglucosamine reductase (307 aa).

Residues 33–197 form the FAD-binding PCMH-type domain; it reads TGGNADFYIT…LEAAFTLAPG (165 aa). Arg-176 is a catalytic residue. Ser-226 serves as the catalytic Proton donor. Residue Glu-296 is part of the active site.

This sequence belongs to the MurB family. FAD is required as a cofactor.

It localises to the cytoplasm. It carries out the reaction UDP-N-acetyl-alpha-D-muramate + NADP(+) = UDP-N-acetyl-3-O-(1-carboxyvinyl)-alpha-D-glucosamine + NADPH + H(+). Its pathway is cell wall biogenesis; peptidoglycan biosynthesis. In terms of biological role, cell wall formation. The protein is UDP-N-acetylenolpyruvoylglucosamine reductase of Staphylococcus aureus (strain MRSA252).